The chain runs to 315 residues: Ribose-phosphate pyrophosphokinase (315 aa).

Residues 37–39 (DGE) and 96–97 (RQ) each bind ATP. His131 and Asp171 together coordinate Mg(2+). The active site involves Lys195. Residues Arg197, Asp221, and 225–229 (DTGGT) contribute to the D-ribose 5-phosphate site.

Belongs to the ribose-phosphate pyrophosphokinase family. Class I subfamily. In terms of assembly, homohexamer. Mg(2+) is required as a cofactor.

The protein localises to the cytoplasm. It catalyses the reaction D-ribose 5-phosphate + ATP = 5-phospho-alpha-D-ribose 1-diphosphate + AMP + H(+). It participates in metabolic intermediate biosynthesis; 5-phospho-alpha-D-ribose 1-diphosphate biosynthesis; 5-phospho-alpha-D-ribose 1-diphosphate from D-ribose 5-phosphate (route I): step 1/1. Functionally, involved in the biosynthesis of the central metabolite phospho-alpha-D-ribosyl-1-pyrophosphate (PRPP) via the transfer of pyrophosphoryl group from ATP to 1-hydroxyl of ribose-5-phosphate (Rib-5-P). This Haemophilus influenzae (strain ATCC 51907 / DSM 11121 / KW20 / Rd) protein is Ribose-phosphate pyrophosphokinase.